A 360-amino-acid polypeptide reads, in one-letter code: Phospho-N-acetylmuramoyl-pentapeptide-transferase (360 aa).

Transmembrane regions (helical) follow at residues 3 to 23 (SILVGAAVALVVSILFTPYLI), 52 to 72 (MGGVAILVAMWAGYLVAHLTV), 81 to 101 (GLLVLGLTTALGIVGFLDDFI), 115 to 135 (AKLVGQLVASVLFAVLAMQFA), 153 to 173 (ITVISFGSVGFVIFAYIAISG), 187 to 207 (LAGGTAAMVLAIYVVISFWQF), 230 to 250 (IALVAGAAMAACVGFLWWNAA), 254 to 274 (IFMGDTGSLALGGLLAGLSMV), 282 to 302 (IIIGGLFVVEALSVVMQIVVF), and 333 to 353 (FWVLAAISAMFGLGLFYADWL).

It belongs to the glycosyltransferase 4 family. MraY subfamily. The cofactor is Mg(2+).

Its subcellular location is the cell membrane. It catalyses the reaction UDP-N-acetyl-alpha-D-muramoyl-L-alanyl-gamma-D-glutamyl-meso-2,6-diaminopimeloyl-D-alanyl-D-alanine + di-trans,octa-cis-undecaprenyl phosphate = di-trans,octa-cis-undecaprenyl diphospho-N-acetyl-alpha-D-muramoyl-L-alanyl-D-glutamyl-meso-2,6-diaminopimeloyl-D-alanyl-D-alanine + UMP. Its pathway is cell wall biogenesis; peptidoglycan biosynthesis. Catalyzes the initial step of the lipid cycle reactions in the biosynthesis of the cell wall peptidoglycan: transfers peptidoglycan precursor phospho-MurNAc-pentapeptide from UDP-MurNAc-pentapeptide onto the lipid carrier undecaprenyl phosphate, yielding undecaprenyl-pyrophosphoryl-MurNAc-pentapeptide, known as lipid I. This chain is Phospho-N-acetylmuramoyl-pentapeptide-transferase, found in Saccharopolyspora erythraea (strain ATCC 11635 / DSM 40517 / JCM 4748 / NBRC 13426 / NCIMB 8594 / NRRL 2338).